Consider the following 91-residue polypeptide: Small ribosomal subunit protein uS19 (91 aa).

It belongs to the universal ribosomal protein uS19 family.

Protein S19 forms a complex with S13 that binds strongly to the 16S ribosomal RNA. The chain is Small ribosomal subunit protein uS19 from Parasynechococcus marenigrum (strain WH8102).